The sequence spans 910 residues: MVGTCHSMAASRSTRVTRSTVGLNGLDESFCGRTLRNRSIAHPEEISSHSQVRSRSPKKRAEPVPTQKGTNNGRTSDVRQQSARDSWVSPRKRRLSSSEKDDLERQALESCERRQAEPAPPVFKNIKRCLRAEATNSSEEDSPVKPDKEPGEHRRIVVDHDADFQGAKRACRCLILDDCEKREVKKVNVSEEGPLNAAVVEEITGYLTVNGVDDSDSAVINCDDCQPDGNTKQNNPGSCVLQEESVAGDGDSETQTSVFCGSRKEDSCIDHFVPCTKSDVQVKLEDHKLVTACLPVERRNQLTAESASGPVSEIQSSLRDSEEEVDVVGDSSASKEQCNENSSNPLDTGSERMPVSGEPELSSILDCVSAQMTSLSEPQEHRYTLRTSPRRAALARSSPTKTTSPYRENGQLEETNLSPQETNTTVSDHVSESPTDPAEVPQDGKVLCCDSENYGSEGLSKPPSEARVNIGHLPSAKESASQHTAEEEDDDPDVYYFESDHVALKHNKDYQRLLQTIAVLEAQRSQAVQDLESLGKHQREALKNPIGFVEKLQKKADIGLPYPQRVVQLPEIMWDQYTNSLGNFEREFKHRKRHTRRVKLVFDKVGLPARPKSPLDPKKDGESLSYSMLPLSDGPEGSHNRPQMIRGRLCDDSKPETFNQLWTVEEQKKLEQLLLKYPPEEVESRRWQKIADELGNRTAKQVASRVQKYFIKLTKAGIPVPGRTPNLYIYSRKSSTSRRQHPLNKHLFKPSTFMTSHEPPVYMDEDDDRSCLHSHMSTAAEEASDEESIPIIYRSLPEYKELLQFKKLKKQKLQQMQAESGFVQHVGFKCDNCGVEPIQGVRWHCQDCPPEMSLDFCDSCSDCPHETDIHKEDHQLEPVYKSETFLDRDYCVSQGTSYSYLDPNYFPANR.

Disordered regions lie at residues 41–117 and 133–153; these read AHPE…RQAE and EATN…PGEH. Over residues 67 to 84 the composition is skewed to polar residues; that stretch reads QKGTNNGRTSDVRQQSAR. Phosphoserine occurs at positions 89, 96, 137, 138, and 142. Basic and acidic residues predominate over residues 96-116; it reads SSSEKDDLERQALESCERRQA. A compositionally biased stretch (basic and acidic residues) spans 142 to 153; the sequence is SPVKPDKEPGEH. Residue Lys283 forms a Glycyl lysine isopeptide (Lys-Gly) (interchain with G-Cter in SUMO2) linkage. Disordered regions lie at residues 303-358, 373-444, and 609-641; these read TAES…VSGE, TSLS…PQDG, and ARPK…SHNR. Polar residues-rich tracts occupy residues 331–347 and 397–434; these read SSAS…NPLD and SSPT…SESP. Lys401 is modified (N6-acetyllysine). The residue at position 613 (Ser613) is a Phosphoserine. Over residues 613 to 622 the composition is skewed to basic and acidic residues; sequence SPLDPKKDGE. Residue Lys654 forms a Glycyl lysine isopeptide (Lys-Gly) (interchain with G-Cter in SUMO2) linkage. One can recognise an HTH myb-type domain in the interval 654 to 714; sequence KPETFNQLWT…RVQKYFIKLT (61 aa). A DNA-binding region (H-T-H motif) is located at residues 687-710; sequence WQKIADELGNRTAKQVASRVQKYF. Lys708 is subject to N6-acetyllysine. Residue Lys715 forms a Glycyl lysine isopeptide (Lys-Gly) (interchain with G-Cter in SUMO2) linkage. The segment at 825-884 adopts a ZZ-type zinc-finger fold; the sequence is HVGFKCDNCGVEPIQGVRWHCQDCPPEMSLDFCDSCSDCPHETDIHKEDHQLEPVYKSET. Zn(2+) is bound by residues Cys830, Cys833, Cys845, Cys848, Cys857, Cys860, His870, and His874.

In terms of assembly, component of the ADA2A-containing complex (ATAC), composed of KAT14, KAT2A, TADA2L, TADA3L, ZZ3, MBIP, WDR5, YEATS2, CCDC101 and DR1. Interacts via (ZZ-type zinc finger) with histone H3 in a methylation-independent manner and acetylation on 'Lys-4' (H3K4ac) moderately enhances the interaction.

It localises to the nucleus. Functionally, histone H3 reader that is required for the ATAC complex-mediated maintenance of histone acetylation and gene activation. Component of the ATAC complex, a complex with histone acetyltransferase activity on histones H3 and H4. The sequence is that of ZZ-type zinc finger-containing protein 3 (Zzz3) from Mus musculus (Mouse).